The sequence spans 183 residues: Endoribonuclease YbeY (183 aa).

Zn(2+) contacts are provided by histidine 143, histidine 147, and histidine 153.

Belongs to the endoribonuclease YbeY family. It depends on Zn(2+) as a cofactor.

It is found in the cytoplasm. In terms of biological role, single strand-specific metallo-endoribonuclease involved in late-stage 70S ribosome quality control and in maturation of the 3' terminus of the 16S rRNA. The protein is Endoribonuclease YbeY of Rickettsia bellii (strain OSU 85-389).